A 522-amino-acid chain; its full sequence is MEPEGRGSLFEDSDLLHAGNPKENDVTAVLLTPGSQELMIRDMAEALTQWRQLNSPQGDVPEKPRNLVLLGLPISTPDVISQLEHEEELEREVSKAASQKHWETIPESKELTPEKDISEEESAPGVLIVRFSKESSSECEDSLESQQENHEKHLIQEAVTEKSSRERSYQSDEFRRNCTQRSLLVQQQGERLHHCDSFKNNLKQNSDIIRHERICAGKKPWKCNECEKAFSYYSAFVLHQRIHTGEKPYECNECGKAFSQSIHLTLHQRIHTGEKPYECHECGKAFSHRSALIRHHIIHTGEKPYECNECGKAFNQSSYLTQHQRIHTGEKPYECNECGKAFSQSTFLTQHQVIHTGEKPYKCNECGKAFSDRSGLIQHQRTHTGERPYECNECGKAFGYCSALTQHQRTHTGEKPYKCNDCAKAFSDRSALIRHQRTHTGEKPYKCKDCGKAFSQSSSLTKHQKTHTGEKPYKCKECGKAFSQSSSLSQHQKTHAGVKTKKYVQALSEHLTFGQHKRIHTG.

2 disordered regions span residues 1–22 (MEPE…GNPK) and 96–124 (AASQ…ESAP). The span at 100–116 (KHWETIPESKELTPEKD) shows a compositional bias: basic and acidic residues. 10 consecutive C2H2-type zinc fingers follow at residues 221–243 (WKCN…QRIH), 249–271 (YECN…QRIH), 277–299 (YECH…HIIH), 305–327 (YECN…QRIH), 333–355 (YECN…QVIH), 361–383 (YKCN…QRTH), 389–411 (YECN…QRTH), 417–439 (YKCN…QRTH), 445–467 (YKCK…QKTH), and 473–495 (YKCK…QKTH).

The protein belongs to the krueppel C2H2-type zinc-finger protein family.

The protein resides in the nucleus. May be involved in transcriptional regulation. The polypeptide is Zinc finger protein 892 (Homo sapiens (Human)).